The chain runs to 116 residues: Large ribosomal subunit protein bL17 (116 aa).

Belongs to the bacterial ribosomal protein bL17 family. Part of the 50S ribosomal subunit. Contacts protein L32.

In Prochlorococcus marinus (strain SARG / CCMP1375 / SS120), this protein is Large ribosomal subunit protein bL17.